Reading from the N-terminus, the 142-residue chain is Large ribosomal subunit protein uL13 (142 aa).

This sequence belongs to the universal ribosomal protein uL13 family. As to quaternary structure, part of the 50S ribosomal subunit.

This protein is one of the early assembly proteins of the 50S ribosomal subunit, although it is not seen to bind rRNA by itself. It is important during the early stages of 50S assembly. The polypeptide is Large ribosomal subunit protein uL13 (Pseudoalteromonas atlantica (strain T6c / ATCC BAA-1087)).